A 275-amino-acid chain; its full sequence is Acetyl-coenzyme A carboxylase carboxyl transferase subunit beta (275 aa).

Residues 18–275 (KDNAGPAVPS…IHRLGGEMHA (258 aa)) enclose the CoA carboxyltransferase N-terminal domain. The tract at residues 23–47 (PAVPSNTHSSKSNGNPVSEMKENKR) is disordered. A compositionally biased stretch (polar residues) spans 26–38 (PSNTHSSKSNGNP).

This sequence belongs to the AccD/PCCB family. As to quaternary structure, acetyl-CoA carboxylase is a heterohexamer composed of biotin carboxyl carrier protein (AccB), biotin carboxylase (AccC) and two subunits each of ACCase subunit alpha (AccA) and ACCase subunit beta (AccD).

It is found in the cytoplasm. It carries out the reaction N(6)-carboxybiotinyl-L-lysyl-[protein] + acetyl-CoA = N(6)-biotinyl-L-lysyl-[protein] + malonyl-CoA. It participates in lipid metabolism; malonyl-CoA biosynthesis; malonyl-CoA from acetyl-CoA: step 1/1. Functionally, component of the acetyl coenzyme A carboxylase (ACC) complex. Biotin carboxylase (BC) catalyzes the carboxylation of biotin on its carrier protein (BCCP) and then the CO(2) group is transferred by the transcarboxylase to acetyl-CoA to form malonyl-CoA. This chain is Acetyl-coenzyme A carboxylase carboxyl transferase subunit beta, found in Alkaliphilus oremlandii (strain OhILAs) (Clostridium oremlandii (strain OhILAs)).